Consider the following 57-residue polypeptide: Large ribosomal subunit protein bL32B (57 aa).

This sequence belongs to the bacterial ribosomal protein bL32 family.

The chain is Large ribosomal subunit protein bL32B (rpmF2) from Listeria innocua serovar 6a (strain ATCC BAA-680 / CLIP 11262).